The chain runs to 296 residues: MIYLHAIDPIAFSLGPVQVHWYGLMYLAAFFSAWALGRSRILRGRLPGVDMDGFSDLLFYGMLGVVLGGRIGYMLFYAFETFLANPLILFKVWEGGMSFHGGLLGVLIACWLWARKHRLHFFDVMDFVAPLVPLGLGFGRLGNFVGGELWGKFTQAGWGVIFPHAPELADRLPAQIQAQYAAGALNQFARHPSQLYEAALEGVVMFVVLWTFSMKPRARYAVSGLFALLYGVFRFIVEFVRVPDAPIGYLAFNWLTMGQILSLPLVAVGLVLLAMSRRAPVLQPVLPVPAGVEAAK.

4 helical membrane passes run 10 to 30 (IAFS…LAAF), 57 to 77 (LLFY…MLFY), 92 to 112 (VWEG…ACWL), and 119 to 139 (LHFF…LGFG). R140 lines the a 1,2-diacyl-sn-glycero-3-phospho-(1'-sn-glycerol) pocket. Transmembrane regions (helical) follow at residues 194–214 (QLYE…TFSM), 220–240 (YAVS…VEFV), and 254–274 (WLTM…VLLA).

Belongs to the Lgt family.

It is found in the cell inner membrane. The catalysed reaction is L-cysteinyl-[prolipoprotein] + a 1,2-diacyl-sn-glycero-3-phospho-(1'-sn-glycerol) = an S-1,2-diacyl-sn-glyceryl-L-cysteinyl-[prolipoprotein] + sn-glycerol 1-phosphate + H(+). It participates in protein modification; lipoprotein biosynthesis (diacylglyceryl transfer). Functionally, catalyzes the transfer of the diacylglyceryl group from phosphatidylglycerol to the sulfhydryl group of the N-terminal cysteine of a prolipoprotein, the first step in the formation of mature lipoproteins. The protein is Phosphatidylglycerol--prolipoprotein diacylglyceryl transferase of Xanthomonas axonopodis pv. citri (strain 306).